A 161-amino-acid chain; its full sequence is Allophycocyanin alpha chain (161 aa).

Residue asparagine 71 is modified to N4-methylasparagine. Cysteine 81 contributes to the (2R,3E)-phycocyanobilin binding site.

This sequence belongs to the phycobiliprotein family. As to quaternary structure, heterodimer of an alpha and a beta chain. Post-translationally, contains one covalently linked phycocyanobilin chromophore.

It localises to the plastid. The protein localises to the cyanelle thylakoid membrane. In terms of biological role, light-harvesting photosynthetic bile pigment-protein from the phycobiliprotein complex. Allophycocyanin has a maximum absorption at approximately 650 nanometers. This is Allophycocyanin alpha chain (apcA) from Cyanophora paradoxa.